The primary structure comprises 258 residues: Kallikrein-1 (258 aa).

A signal peptide spans 1–18 (MWFLVLCLALSLGGTGAA). The propeptide at 19–24 (PPIQSR) is activation peptide. The region spanning 25 to 255 (IVGGWECSQP…YVKWIEDTIA (231 aa)) is the Peptidase S1 domain. 5 disulfides stabilise this stretch: Cys-31–Cys-170, Cys-47–Cys-63, Cys-149–Cys-216, Cys-181–Cys-195, and Cys-206–Cys-231. The active-site Charge relay system is the His-62. Residue Ser-90 is glycosylated (O-linked (GalNAc...) serine). Residue Asn-99 is glycosylated (N-linked (GlcNAc...) asparagine). A glycan (O-linked (GalNAc...) serine) is linked at Ser-101. N-linked (GlcNAc...) asparagine glycosylation is present at Asn-105. Catalysis depends on Asp-117, which acts as the Charge relay system. N-linked (GlcNAc...) asparagine glycosylation is present at Asn-161. O-linked (GalNAc...) serine glycosylation is present at Ser-163. Ser-210 functions as the Charge relay system in the catalytic mechanism.

This sequence belongs to the peptidase S1 family. Kallikrein subfamily.

It catalyses the reaction Preferential cleavage of Arg-|-Xaa bonds in small molecule substrates. Highly selective action to release kallidin (lysyl-bradykinin) from kininogen involves hydrolysis of Met-|-Xaa or Leu-|-Xaa.. Its function is as follows. Glandular kallikreins cleave Met-Lys and Arg-Ser bonds in kininogen to release Lys-bradykinin. This Papio hamadryas (Hamadryas baboon) protein is Kallikrein-1 (KLK1).